The chain runs to 225 residues: Histone-arginine methyltransferase METTL23 (225 aa).

Belongs to the methyltransferase superfamily. METTL23 family. As to quaternary structure, interacts with HSPA5, HSP90B1, TUBULIN, UGGT1 and UGGT2. Interacts with TET3. Interacts with STPG4.

Its subcellular location is the nucleus. The protein localises to the cytoplasm. It catalyses the reaction L-arginyl-[protein] + 2 S-adenosyl-L-methionine = N(omega),N(omega)-dimethyl-L-arginyl-[protein] + 2 S-adenosyl-L-homocysteine + 2 H(+). Functionally, histone methyltransferase that dimethylates histone H3 at 'Arg-17', forming asymmetric dimethylarginine (H3R17me2a), leading to activate transcription via chromatin remodeling. Maternal factor involved in epigenetic chromatin reprogramming of the paternal genome in the zygote: mediates H3R17me2a, promoting histone H3.3 incorporation in the male pronucleus, leading to TET3 recruitment and subsequent DNA demethylation. The sequence is that of Histone-arginine methyltransferase METTL23 from Rattus norvegicus (Rat).